Here is a 923-residue protein sequence, read N- to C-terminus: Alanine--tRNA ligase (923 aa).

Zn(2+) is bound by residues H614, H618, C717, and H721. The segment at 884-903 is disordered; sequence KVGGGGGGPPDFAQGGGPDA. Gly residues predominate over residues 885 to 901; that stretch reads VGGGGGGPPDFAQGGGP.

This sequence belongs to the class-II aminoacyl-tRNA synthetase family. The cofactor is Zn(2+).

The protein localises to the cytoplasm. It carries out the reaction tRNA(Ala) + L-alanine + ATP = L-alanyl-tRNA(Ala) + AMP + diphosphate. Catalyzes the attachment of alanine to tRNA(Ala) in a two-step reaction: alanine is first activated by ATP to form Ala-AMP and then transferred to the acceptor end of tRNA(Ala). Also edits incorrectly charged Ser-tRNA(Ala) and Gly-tRNA(Ala) via its editing domain. The chain is Alanine--tRNA ligase from Haloquadratum walsbyi (strain DSM 16790 / HBSQ001).